The following is a 411-amino-acid chain: NADH-quinone oxidoreductase subunit D (411 aa).

Belongs to the complex I 49 kDa subunit family. NDH-1 is composed of 14 different subunits. Subunits NuoB, C, D, E, F, and G constitute the peripheral sector of the complex.

Its subcellular location is the cell inner membrane. The enzyme catalyses a quinone + NADH + 5 H(+)(in) = a quinol + NAD(+) + 4 H(+)(out). Functionally, NDH-1 shuttles electrons from NADH, via FMN and iron-sulfur (Fe-S) centers, to quinones in the respiratory chain. The immediate electron acceptor for the enzyme in this species is believed to be ubiquinone. Couples the redox reaction to proton translocation (for every two electrons transferred, four hydrogen ions are translocated across the cytoplasmic membrane), and thus conserves the redox energy in a proton gradient. The polypeptide is NADH-quinone oxidoreductase subunit D (Phenylobacterium zucineum (strain HLK1)).